Here is a 466-residue protein sequence, read N- to C-terminus: F-box/LRR-repeat protein fbxl-1 (466 aa).

Residues Ser54 to Val100 enclose the F-box domain. 11 LRR repeats span residues Gly122–Arg147, Cys148–Tyr173, Cys174–Gly199, Cys200–Asn225, Cys226–His251, Met252–Gly277, Ala278–His303, Ser304–Gly329, Cys330–Asn355, Cys356–Lys381, and Cys408–His433.

Component of the SCF (SKP1-CUL1-F-box protein)-type E3 ubiquitin ligase complex. In terms of tissue distribution, expressed in neuroglial cells such as the socket cell and sheath cell, neurosecretory motor neurons and regions around the pharynx and anus.

The protein localises to the perikaryon. It localises to the cell projection. It is found in the dendrite. The protein resides in the cilium. Its subcellular location is the axon. In terms of biological role, substrate-recognition component of the SCF (SKP1-CUL1-F-box protein)-type E3 ubiquitin ligase complex. Plays a role in regulating the entry into the dauer state. In hermaphrodites, may play a role in modulating the rate of defecation. This chain is F-box/LRR-repeat protein fbxl-1, found in Caenorhabditis elegans.